Reading from the N-terminus, the 201-residue chain is Orotidine 5'-phosphate decarboxylase (201 aa).

Substrate is bound by residues Asp8, Lys26, 52-61 (DLKFCDIPST), Thr106, Arg153, Gln161, Gly180, and Arg181. The active-site Proton donor is the Lys54.

The protein belongs to the OMP decarboxylase family. Type 1 subfamily. As to quaternary structure, homodimer.

It carries out the reaction orotidine 5'-phosphate + H(+) = UMP + CO2. Its pathway is pyrimidine metabolism; UMP biosynthesis via de novo pathway; UMP from orotate: step 2/2. In terms of biological role, catalyzes the decarboxylation of orotidine 5'-monophosphate (OMP) to uridine 5'-monophosphate (UMP). The chain is Orotidine 5'-phosphate decarboxylase (pyrF) from Thermotoga maritima (strain ATCC 43589 / DSM 3109 / JCM 10099 / NBRC 100826 / MSB8).